The sequence spans 174 residues: Streptothricin acetyltransferase (174 aa).

Residues Phe20 to Ala170 enclose the N-acetyltransferase domain.

The protein belongs to the acetyltransferase family. GNAT subfamily.

It carries out the reaction streptothricin F + acetyl-CoA = N(beta)-acetylstreptothricin F + CoA + H(+). Its function is as follows. Involved in resistance to streptothricin, a broad-spectrum antibiotic produced by streptomycetes. Detoxifies streptothricin via acetylation of the beta amino group of the first beta-lysyl moiety of streptothricin. In Escherichia coli, this protein is Streptothricin acetyltransferase (sat-1).